A 1601-amino-acid chain; its full sequence is PH and SEC7 domain-containing protein (1601 aa).

A mediates regulation of axon branching and microtubule organization region spans residues 1 to 340; the sequence is MSEELKVVLR…TGDLILNLSR (340 aa). In terms of domain architecture, PDZ spans 6 to 88; the sequence is KVVLRRSEQH…LVTLELKRDP (83 aa). Disordered stretches follow at residues 113–192, 211–322, 339–440, 459–657, 737–780, 872–965, and 1040–1126; these read NIYD…SSTK, TSPT…PAKA, SRTP…SLTN, LEED…SSSG, NSSL…SETA, QQQQ…LLSC, and QQLK…SDVE. Over residues 118–128 the composition is skewed to polar residues; that stretch reads HSSSTNSSPNH. Low complexity predominate over residues 166 to 191; the sequence is ASGSTTTTTTATHTHSHSRNSSASST. Residues 283–297 are compositionally biased toward polar residues; it reads QSLQHSNSYSGSPVT. The segment covering 300-311 has biased composition (basic and acidic residues); it reads RFADREPEREPE. Positions 323-340 match the Microtubule elimination domain (MTED); Binds tubulin and blocks microtubule polymerization motif; that stretch reads PRFEAYMMTGDLILNLSR. The segment covering 339-348 has biased composition (polar residues); the sequence is SRTPQTSNPL. Residues 353-362 are compositionally biased toward basic and acidic residues; sequence KKIDSLRDSP. 3 stretches are compositionally biased toward low complexity: residues 382-399, 409-424, and 468-487; these read SSPTSSSSVDSPTNTSSD, QKQQQQQQQTYQQQQQ, and QRQQQQRYRQQQNQQRYEYY. Over residues 488-505 the composition is skewed to acidic residues; the sequence is QNEDELEEQEEVEEEREE. The span at 510-519 shows a compositional bias: polar residues; that stretch reads YDITNIETYQ. The segment covering 526-557 has biased composition (acidic residues); the sequence is DDDDSDRQCLVDDDDDDDAYDDEENDAGDEDY. 2 stretches are compositionally biased toward polar residues: residues 558 to 567 and 617 to 630; these read STNSLGSGSA and TSFSVPTSPISLST. Residues 640–657 are compositionally biased toward low complexity; that stretch reads SVPTSPEPSSLVPESSSG. Residues 737-747 are compositionally biased toward polar residues; that stretch reads NSSLASNNNEG. Low complexity-rich tracts occupy residues 752-780, 872-942, 949-965, and 1040-1052; these read NRSSSSSSNSSDNNNCSSNTGEPATSETA, QQQQ…QQQQ, GGQVAQPPSGIPGLLSC, and QQLKQQLRAQQQQ. A mediates association to the membrane and rescricts the microtubule-inhibiting activity to the cell cortex region spans residues 894-1601; that stretch reads SSSPQHSAVG…PTNRKEKKKK (708 aa). Residues 1053 to 1071 show a composition bias toward basic and acidic residues; the sequence is QRERERDRDRDREQSEHKV. Residues 1125–1291 form the SEC7 domain; that stretch reads VESLHSYHYS…KSLYQAIKTK (167 aa). Positions 1332–1445 constitute a PH domain; the sequence is VEYKKGYVMR…WVETINYVCA (114 aa). The segment at 1544–1601 is disordered; it reads LELQAQQPSPASHEEEADTFPVGTTACTPPTPQSINQKDQQKEQQQQQPTNRKEKKKK. Polar residues predominate over residues 1568–1579; sequence TACTPPTPQSIN.

Belongs to the PSD family. Interacts (via MTED motif) with tubulin. In terms of tissue distribution, expressed in the head (at protein level).

It is found in the cell projection. The protein resides in the axon. Its subcellular location is the cytoplasm. The protein localises to the cell membrane. It localises to the cell cortex. Its function is as follows. Guanine nucleotide exchange factor for Arf6. Regulates axon growth and branching by inhibiting microtubule polymerisation at the cortex. Together with shot, promotes axonal microtubule bundle integrity. Required for normal ethanol-induced tolerance and preference. Probably by activating Arf6, counteracts ethanol-induced sedation. The chain is PH and SEC7 domain-containing protein from Drosophila melanogaster (Fruit fly).